The primary structure comprises 664 residues: Cyclic nucleotide-gated channel alpha-2 (664 aa).

A compositionally biased stretch (polar residues) spans 1–10 (MMTEKSNGVK). Residues 1–61 (MMTEKSNGVK…LQRLAEMDTP (61 aa)) are disordered. The Cytoplasmic segment spans residues 1-146 (MMTEKSNGVK…PAGDWYYRWL (146 aa)). Residues 147–168 (FVIAMPVLYNWCLLVARACFSD) form a helical membrane-spanning segment. Topologically, residues 169 to 178 (LQRNYFVVWL) are extracellular. A helical transmembrane segment spans residues 179–199 (VLDYFSDTVYIADLIIRLRTG). At 200 to 224 (FLEQGLLVKDPKKLRDNYIHTLQFK) the chain is on the cytoplasmic side. Residues 225–243 (LDVASIIPTDLIYFAVGIH) form a helical membrane-spanning segment. At 244–248 (SPEVR) the chain is on the extracellular side. A helical membrane pass occupies residues 249–267 (FNRLLHFARMFEFFDRTET). The Cytoplasmic segment spans residues 268-274 (RTSYPNI). Residues 272–380 (PNIFRISNLV…GNVGSMISNM (109 aa)) form an ion conduction pathway region. The helical transmembrane segment at 275–298 (FRISNLVLYILVIIHWNACIYYAI) threads the bilayer. At 299-321 (SKSIGFGVDTWVYPNITDPEYGY) the chain is on the extracellular side. The next 2 helical transmembrane spans lie at 322–356 (LAREYIYCLYWSTLTLTTIGETPPPVKDEEYLFVI) and 357–381 (FDFLIGVLIFATIVGNVGSMISNMN). The interval 339–342 (TIGE) is selectivity filter. A C-linker region spans residues 382–458 (ATRAEFQAKI…STLKKVRIFQ (77 aa)). Over 382–664 (ATRAEFQAKI…INTPEPAVAE (283 aa)) the chain is Cytoplasmic. The segment at 462–582 (AGLLVELVLK…EERGREILMK (121 aa)) is cyclic nucleotide-binding domain. Residues Gly522, Ser525, Arg538, and Thr539 each contribute to the 3',5'-cyclic GMP site. The 3',5'-cyclic AMP site is built by Arg538 and Thr539. Residues 599-653 (VQEKLEQLETNMETLYTRFARLLAEYTGAQQKLKQRITVLETKMKQNHEDDYLSD) adopt a coiled-coil conformation.

Belongs to the cyclic nucleotide-gated cation channel (TC 1.A.1.5) family. CNGA2 subfamily. In terms of assembly, the olfactory cyclic nucleotide-gated channel is an heterotetramer composed of CNGA2, CNGA4 and CNGB1b subunits with 2:1:1 stoichiometry.

The protein localises to the cell projection. It localises to the cilium membrane. It carries out the reaction Ca(2+)(in) = Ca(2+)(out). The enzyme catalyses Na(+)(in) = Na(+)(out). It catalyses the reaction K(+)(in) = K(+)(out). The catalysed reaction is NH4(+)(in) = NH4(+)(out). It carries out the reaction Rb(+)(in) = Rb(+)(out). The enzyme catalyses Li(+)(in) = Li(+)(out). It catalyses the reaction Cs(+)(in) = Cs(+)(out). Pore-forming subunit of the olfactory cyclic nucleotide-gated channel. Operates in the cilia of olfactory sensory neurons where chemical stimulation of the odorant is converted to an electrical signal. Mediates odorant-induced cAMP-dependent Ca(2+) influx triggering neuron depolarization. The rise of intracellular Ca(2+) levels potentiates the olfactory response by activating Ca(2+)-dependent Cl(-) channels, but it also serves as a negative feedback signal to desensitize the channel for rapid adaptation to odorants. Conducts cAMP- and cGMP-gated ion currents, with permeability for monovalent and divalent cations. This is Cyclic nucleotide-gated channel alpha-2 from Mus musculus (Mouse).